The primary structure comprises 267 residues: Dihydropteroate synthase (267 aa).

One can recognise a Pterin-binding domain in the interval 1-251; sequence MTKTKIMGIL…NVELNAKLAK (251 aa). Asparagine 11 is a Mg(2+) binding site. Residues threonine 51, aspartate 84, asparagine 103, aspartate 167, lysine 203, and 239-241 contribute to the (7,8-dihydropterin-6-yl)methyl diphosphate site; that span reads RVH.

It belongs to the DHPS family. In terms of assembly, homodimer. The cofactor is Mg(2+).

It carries out the reaction (7,8-dihydropterin-6-yl)methyl diphosphate + 4-aminobenzoate = 7,8-dihydropteroate + diphosphate. It functions in the pathway cofactor biosynthesis; tetrahydrofolate biosynthesis; 7,8-dihydrofolate from 2-amino-4-hydroxy-6-hydroxymethyl-7,8-dihydropteridine diphosphate and 4-aminobenzoate: step 1/2. Catalyzes the condensation of para-aminobenzoate (pABA) with 6-hydroxymethyl-7,8-dihydropterin diphosphate (DHPt-PP) to form 7,8-dihydropteroate (H2Pte), the immediate precursor of folate derivatives. The sequence is that of Dihydropteroate synthase (folP) from Staphylococcus aureus (strain Mu50 / ATCC 700699).